The following is a 229-amino-acid chain: Potassium/proton antiporter CemA (229 aa).

4 consecutive transmembrane segments (helical) span residues F7–F27, L114–L134, I154–I174, and I189–I209.

It belongs to the CemA family.

Its subcellular location is the plastid. The protein localises to the chloroplast inner membrane. The enzyme catalyses K(+)(in) + H(+)(out) = K(+)(out) + H(+)(in). In terms of biological role, contributes to K(+)/H(+) antiport activity by supporting proton efflux to control proton extrusion and homeostasis in chloroplasts in a light-dependent manner to modulate photosynthesis. Prevents excessive induction of non-photochemical quenching (NPQ) under continuous-light conditions. Indirectly promotes efficient inorganic carbon uptake into chloroplasts. The sequence is that of Potassium/proton antiporter CemA from Gossypium hirsutum (Upland cotton).